A 147-amino-acid chain; its full sequence is Hemoglobin subunit beta (147 aa).

At valine 2 the chain carries N-acetylvaline. Positions 3–147 constitute a Globin domain; sequence HLTGDEKAAV…VANALAHKYH (145 aa). A Phosphothreonine modification is found at threonine 13. Phosphoserine is present on serine 45. At lysine 60 the chain carries N6-acetyllysine. Histidine 64 serves as a coordination point for heme b. Lysine 83 bears the N6-acetyllysine mark. Histidine 93 is a binding site for heme b. Cysteine 94 carries the post-translational modification S-nitrosocysteine. At lysine 145 the chain carries N6-acetyllysine.

The protein belongs to the globin family. In terms of assembly, heterotetramer of two alpha chains and two beta chains. As to expression, red blood cells.

Functionally, involved in oxygen transport from the lung to the various peripheral tissues. In Saimiri sciureus (Common squirrel monkey), this protein is Hemoglobin subunit beta (HBB).